The sequence spans 557 residues: Dihydroxy-acid dehydratase (557 aa).

Residue Asp78 participates in Mg(2+) binding. A [2Fe-2S] cluster-binding site is contributed by Cys119. 2 residues coordinate Mg(2+): Asp120 and Lys121. Residue Lys121 is modified to N6-carboxylysine. Cys192 is a [2Fe-2S] cluster binding site. Position 442 (Glu442) interacts with Mg(2+). The active-site Proton acceptor is Ser468.

Belongs to the IlvD/Edd family. As to quaternary structure, homodimer. [2Fe-2S] cluster serves as cofactor. The cofactor is Mg(2+).

It catalyses the reaction (2R)-2,3-dihydroxy-3-methylbutanoate = 3-methyl-2-oxobutanoate + H2O. The catalysed reaction is (2R,3R)-2,3-dihydroxy-3-methylpentanoate = (S)-3-methyl-2-oxopentanoate + H2O. It functions in the pathway amino-acid biosynthesis; L-isoleucine biosynthesis; L-isoleucine from 2-oxobutanoate: step 3/4. Its pathway is amino-acid biosynthesis; L-valine biosynthesis; L-valine from pyruvate: step 3/4. In terms of biological role, functions in the biosynthesis of branched-chain amino acids. Catalyzes the dehydration of (2R,3R)-2,3-dihydroxy-3-methylpentanoate (2,3-dihydroxy-3-methylvalerate) into 2-oxo-3-methylpentanoate (2-oxo-3-methylvalerate) and of (2R)-2,3-dihydroxy-3-methylbutanoate (2,3-dihydroxyisovalerate) into 2-oxo-3-methylbutanoate (2-oxoisovalerate), the penultimate precursor to L-isoleucine and L-valine, respectively. The protein is Dihydroxy-acid dehydratase of Bacillus cereus (strain AH187).